The sequence spans 228 residues: Uracil-DNA glycosylase (228 aa).

Asp-64 (proton acceptor) is an active-site residue.

This sequence belongs to the uracil-DNA glycosylase (UDG) superfamily. UNG family. In terms of assembly, monomer.

The protein resides in the cytoplasm. The enzyme catalyses Hydrolyzes single-stranded DNA or mismatched double-stranded DNA and polynucleotides, releasing free uracil.. Excises uracil residues from the DNA which can arise as a result of misincorporation of dUMP residues by DNA polymerase or due to deamination of cytosine. This is Uracil-DNA glycosylase from Escherichia coli O6:H1 (strain CFT073 / ATCC 700928 / UPEC).